The following is a 186-amino-acid chain: Negative modulator of initiation of replication (186 aa).

It belongs to the SeqA family. As to quaternary structure, homodimer. Polymerizes to form helical filaments.

It localises to the cytoplasm. Negative regulator of replication initiation, which contributes to regulation of DNA replication and ensures that replication initiation occurs exactly once per chromosome per cell cycle. Binds to pairs of hemimethylated GATC sequences in the oriC region, thus preventing assembly of replication proteins and re-initiation at newly replicated origins. Repression is relieved when the region becomes fully methylated. The polypeptide is Negative modulator of initiation of replication (Haemophilus ducreyi (strain 35000HP / ATCC 700724)).